The sequence spans 1684 residues: GRIP and coiled-coil domain-containing protein 2 (1684 aa).

N-acetylmethionine is present on methionine 1. Residues 1-22 (MEDLVQDGVASPATPGTGKSKL) form a disordered region. Serine 11 carries the post-translational modification Phosphoserine. Threonine 14 is modified (phosphothreonine). Residues 110-1618 (VTKMGDAHKE…REKSAANLEY (1509 aa)) are a coiled coil. Phosphoserine is present on residues serine 236, serine 1483, and serine 1487. Positions 1475-1502 (LKNEPTTRSPVSSQQSLKNLRERRNTDL) are disordered. Residues 1477 to 1492 (NEPTTRSPVSSQQSLK) show a composition bias toward polar residues. Residues 1574 to 1613 (HLNGLLRETEATNAILMEQIKLLKSEIRRLERNQEREKSA) form a mediates interaction with RAB6A region. Residues 1574–1684 (HLNGLLRETE…SYLHSWSGLR (111 aa)) form a mediates interaction with RAB9A region. Positions 1609 to 1659 (REKSAANLEYLKNVLLQFIFLKPGSERERLLPVINTMLQLSPEEKGKLAAV) constitute a GRIP domain.

Homodimer. Interacts (via GRIP domain) with RAB6A (preferentially in its GTP-bound form). May interact (RAB6A-dependent) with ARL1; according to PubMed:19703403, RAB6A and ARL1 are not involved in GCC2 Golgi localization as proposed by PubMed:18243103. Interacts (probably via GRIP domain) with RAB9A (preferentially in its GTP-bound form). Interacts with CLASP1 and CLASP2; recruits both proteins to membranes of the TGN. Interacts with STX16. In terms of tissue distribution, ubiquitous.

The protein resides in the cytoplasm. It localises to the golgi apparatus. The protein localises to the trans-Golgi network membrane. Golgin which probably tethers transport vesicles to the trans-Golgi network (TGN) and regulates vesicular transport between the endosomes and the Golgi. As a RAB9A effector it is involved in recycling of the mannose 6-phosphate receptor from the late endosomes to the TGN. May also play a role in transport between the recycling endosomes and the Golgi. Required for maintenance of the Golgi structure, it is involved in the biogenesis of noncentrosomal, Golgi-associated microtubules through recruitment of CLASP1 and CLASP2. This chain is GRIP and coiled-coil domain-containing protein 2 (GCC2), found in Homo sapiens (Human).